Consider the following 532-residue polypeptide: O-phosphoserine--tRNA(Cys) ligase (532 aa).

Substrate is bound by residues 186 to 188 (HMT), 231 to 233 (SAS), 273 to 274 (YY), and N317.

Belongs to the class-II aminoacyl-tRNA synthetase family. O-phosphoseryl-tRNA(Cys) synthetase subfamily. In terms of assembly, homotetramer. Interacts with SepCysS.

The catalysed reaction is tRNA(Cys) + O-phospho-L-serine + ATP = O-phospho-L-seryl-tRNA(Cys) + AMP + diphosphate. Functionally, catalyzes the attachment of O-phosphoserine (Sep) to tRNA(Cys). This is O-phosphoserine--tRNA(Cys) ligase from Methanothermobacter thermautotrophicus (strain ATCC 29096 / DSM 1053 / JCM 10044 / NBRC 100330 / Delta H) (Methanobacterium thermoautotrophicum).